Reading from the N-terminus, the 217-residue chain is MENDDPQKLMPEPRIFVERTLALIKPDAIHKTDEIEDIILQSGFTILQKRRLQLSPEQCSDFYAEHYGKLHFPHLTAFMSSGPVVALALARDQAIATWKAIMGPVSSIKARETHPDCLRARFGTCDLRNAVHGSETFSAAEREIRFMFPHSVIEPIPMGEAAKDYLSRFINPTLLVGLTELCKIKPEDPYTWLADWLMNNNPNKPKVLDGAAVEEAA.

Positions 18–151 (ERTLALIKPD…REIRFMFPHS (134 aa)) are NDK.

Belongs to the NDK family.

The protein localises to the cell projection. It localises to the cilium. Its function is as follows. Functions as part of axonemal radial spoke complexes that play an important part in the motility of sperm and cilia. Does not seem to have nucleoside diphosphate kinase (NDPK) activity. Exhibits a 3'-5' exonuclease activity with a preference for single-stranded DNA, suggesting roles in DNA proofreading and repair. In Danio rerio (Zebrafish), this protein is Nucleoside diphosphate kinase homolog 5 (nme5).